Here is a 201-residue protein sequence, read N- to C-terminus: Small ribosomal subunit protein uS4c (201 aa).

Positions 20–43 (GLTSKRPRAGSDLRNQSRSGKRSQ) are disordered. Residues 89–149 (MRLDNILFRL…NEQKSRALIQ (61 aa)) form the S4 RNA-binding domain.

This sequence belongs to the universal ribosomal protein uS4 family. In terms of assembly, part of the 30S ribosomal subunit. Contacts protein S5. The interaction surface between S4 and S5 is involved in control of translational fidelity.

It is found in the plastid. It localises to the chloroplast. In terms of biological role, one of the primary rRNA binding proteins, it binds directly to 16S rRNA where it nucleates assembly of the body of the 30S subunit. With S5 and S12 plays an important role in translational accuracy. The polypeptide is Small ribosomal subunit protein uS4c (rps4) (Vitis vinifera (Grape)).